Reading from the N-terminus, the 515-residue chain is Serine/threonine-protein kinase STE7 (515 aa).

One can recognise a Protein kinase domain in the interval Leu-191 to Ile-466. Residues Ile-197–Val-205 and Lys-220 each bind ATP. Asp-331 (proton acceptor) is an active-site residue. Phosphoserine is present on Ser-359. At Thr-363 the chain carries Phosphothreonine.

It belongs to the protein kinase superfamily. STE Ser/Thr protein kinase family. MAP kinase kinase subfamily.

The enzyme catalyses L-seryl-[protein] + ATP = O-phospho-L-seryl-[protein] + ADP + H(+). It carries out the reaction L-threonyl-[protein] + ATP = O-phospho-L-threonyl-[protein] + ADP + H(+). The catalysed reaction is L-tyrosyl-[protein] + ATP = O-phospho-L-tyrosyl-[protein] + ADP + H(+). With respect to regulation, phosphorylated at multiple sites in response to pheromone. Its function is as follows. Serine/threonine protein kinase required for cell-type-specific transcription and signal transduction in yeast. It is thought that it is phosphorylated by the ste11 protein kinase and that it can phosphorylate the FUS3 and or KSS1 kinases. This Saccharomyces cerevisiae (strain ATCC 204508 / S288c) (Baker's yeast) protein is Serine/threonine-protein kinase STE7 (STE7).